We begin with the raw amino-acid sequence, 217 residues long: Regulator of G-protein signaling 19 (217 aa).

A disordered region spans residues Met-1 to Ala-29. Phosphoserine occurs at positions 24 and 97. In terms of domain architecture, RGS spans Ser-90–Leu-206. A Phosphoserine; by MAPK1 and MAPK3 modification is found at Ser-151. Positions Leu-207–Ala-217 are interaction with GIPC.

Interacts with GIPC PDZ domain. Interacts with GNAO1. Fatty acylated. Heavily palmitoylated in the cysteine string motif. In terms of processing, phosphorylated, mainly on serine residues. As to expression, highest expression in lung. Placenta, liver and heart also express high levels of GAIP.

It is found in the membrane. Functionally, inhibits signal transduction by increasing the GTPase activity of G protein alpha subunits thereby driving them into their inactive GDP-bound form. Binds to G-alpha subfamily 1 members, with the order G(i)a3 &gt; G(i)a1 &gt; G(o)a &gt;&gt; G(z)a/G(i)a2. Activity on G(z)-alpha is inhibited by phosphorylation and palmitoylation of the G-protein. The protein is Regulator of G-protein signaling 19 (RGS19) of Homo sapiens (Human).